The sequence spans 203 residues: Guanylate kinase (203 aa).

Positions 5 to 183 (GVLYILSAPS…AVEELKSVII (179 aa)) constitute a Guanylate kinase-like domain. Residue 12–19 (APSGAGKT) participates in ATP binding.

The protein belongs to the guanylate kinase family.

The protein resides in the cytoplasm. It carries out the reaction GMP + ATP = GDP + ADP. Functionally, essential for recycling GMP and indirectly, cGMP. The polypeptide is Guanylate kinase (Geobacter sulfurreducens (strain ATCC 51573 / DSM 12127 / PCA)).